Reading from the N-terminus, the 434-residue chain is AT-rich interactive domain-containing protein 5 (434 aa).

Residues 1–120 (MMADTEMQEQ…SSPHVPEESV (120 aa)) form a disordered region. Composition is skewed to basic and acidic residues over residues 25-37 (ELEK…ERPK), 43-54 (DTTHTLDSDVHL), and 78-90 (RNGD…KKIT). A compositionally biased stretch (polar residues) spans 92–102 (DGGQEETTLGE). The 92-residue stretch at 142–233 (PQDQEAFIKE…ALLEYEKHLR (92 aa)) folds into the ARID domain. A disordered region spans residues 237 to 274 (ELNLPGSASLPSSGIEKEASSHQASGSGRTRRDAAARA). The 99-residue stretch at 336-434 (AEVIDVGPPA…RLFVRVPFEQ (99 aa)) folds into the sHSP domain.

It belongs to the small heat shock protein (HSP20) family.

The protein localises to the nucleus. In Arabidopsis thaliana (Mouse-ear cress), this protein is AT-rich interactive domain-containing protein 5 (ARID5).